The sequence spans 221 residues: GTP-binding nuclear protein Ran-A1 (221 aa).

Residues 10 to 174 (DYPSFKLVIV…LYLARKLAGD (165 aa)) form the Small GTPase Ran-type domain. 21-28 (DGGTGKTT) lines the GTP pocket. The segment at 40–48 (KKYEPTIGV) is switch-I. GTP is bound by residues Gly71, 125–128 (NKVD), and 153–155 (SAK). Residues 71 to 87 (GQEKFGGLRDGYYIHGQ) are switch-II. Residues 199-208 (QHEAELAAAA) show a composition bias toward low complexity. Residues 199-221 (QHEAELAAAASQPLPDDDDETFD) form a disordered region.

Belongs to the small GTPase superfamily. Ran family. As to quaternary structure, found in a nuclear export complex with RanGTP, exportin and pre-miRNA.

The protein localises to the nucleus. In terms of biological role, GTP-binding protein involved in nucleocytoplasmic transport. Required for the import of protein into the nucleus and also for RNA export. Involved in chromatin condensation and control of cell cycle. In Nicotiana tabacum (Common tobacco), this protein is GTP-binding nuclear protein Ran-A1 (RAN-A1).